The primary structure comprises 390 residues: T-cell surface glycoprotein CD1e, membrane-associated (390 aa).

An N-terminal signal peptide occupies residues 1–14 (MLLLILLFFKGLVC). Positions 15–33 (HEKSIVGPQPLGWHHPAEA) are cleaved as a propeptide — removed in sCD1e. Residues Asn49 and Asn70 are each glycosylated (N-linked (GlcNAc...) asparagine). 2 cysteine pairs are disulfide-bonded: Cys131–Cys194 and Cys234–Cys288. Residues 215 to 306 (PEVWLSRGPS…GHDIIIHWGG (92 aa)) enclose the Ig-like domain. A helical transmembrane segment spans residues 305-325 (GGYSILLILMYVAVIVTLVTL).

In terms of assembly, heterodimer with B2M (beta-2-microglobulin). The association with B2M appears to be facilitated by the presence of the propeptide. Mono-ubiquitinated. In terms of processing, proteolytically cleaved in endosomes to yield a soluble form.

It is found in the golgi apparatus membrane. The protein resides in the early endosome. It localises to the late endosome. Its subcellular location is the lysosome lumen. Functionally, T-cell surface glycoprotein CD1e, soluble is required for the presentation of glycolipid antigens on the cell surface. The membrane-associated form is not active. The chain is T-cell surface glycoprotein CD1e, membrane-associated (CD1E) from Cavia porcellus (Guinea pig).